The following is a 129-amino-acid chain: Large ribosomal subunit protein bL12 (129 aa).

The protein belongs to the bacterial ribosomal protein bL12 family. As to quaternary structure, homodimer. Part of the ribosomal stalk of the 50S ribosomal subunit. Forms a multimeric L10(L12)X complex, where L10 forms an elongated spine to which 2 to 4 L12 dimers bind in a sequential fashion. Binds GTP-bound translation factors.

Functionally, forms part of the ribosomal stalk which helps the ribosome interact with GTP-bound translation factors. Is thus essential for accurate translation. This Pelotomaculum thermopropionicum (strain DSM 13744 / JCM 10971 / SI) protein is Large ribosomal subunit protein bL12.